The sequence spans 138 residues: Small ribosomal subunit protein uS12 (138 aa).

Positions 33-55 (KEHTNVSSPQKRGVCTRVGTMTP) are disordered. Asp-102 bears the 3-methylthioaspartic acid mark.

The protein belongs to the universal ribosomal protein uS12 family. In terms of assembly, part of the 30S ribosomal subunit. Contacts proteins S8 and S17. May interact with IF1 in the 30S initiation complex.

Functionally, with S4 and S5 plays an important role in translational accuracy. Its function is as follows. Interacts with and stabilizes bases of the 16S rRNA that are involved in tRNA selection in the A site and with the mRNA backbone. Located at the interface of the 30S and 50S subunits, it traverses the body of the 30S subunit contacting proteins on the other side and probably holding the rRNA structure together. The combined cluster of proteins S8, S12 and S17 appears to hold together the shoulder and platform of the 30S subunit. In Bacillus licheniformis (strain ATCC 14580 / DSM 13 / JCM 2505 / CCUG 7422 / NBRC 12200 / NCIMB 9375 / NCTC 10341 / NRRL NRS-1264 / Gibson 46), this protein is Small ribosomal subunit protein uS12.